Here is a 366-residue protein sequence, read N- to C-terminus: Chorismate synthase (366 aa).

Residues arginine 48 and arginine 54 each coordinate NADP(+). FMN is bound by residues arginine 125–serine 127, asparagine 238–alanine 239, glycine 278, lysine 293–serine 297, and arginine 319.

Belongs to the chorismate synthase family. Homotetramer. FMNH2 is required as a cofactor.

It carries out the reaction 5-O-(1-carboxyvinyl)-3-phosphoshikimate = chorismate + phosphate. The protein operates within metabolic intermediate biosynthesis; chorismate biosynthesis; chorismate from D-erythrose 4-phosphate and phosphoenolpyruvate: step 7/7. Catalyzes the anti-1,4-elimination of the C-3 phosphate and the C-6 proR hydrogen from 5-enolpyruvylshikimate-3-phosphate (EPSP) to yield chorismate, which is the branch point compound that serves as the starting substrate for the three terminal pathways of aromatic amino acid biosynthesis. This reaction introduces a second double bond into the aromatic ring system. The sequence is that of Chorismate synthase from Neisseria gonorrhoeae (strain NCCP11945).